The chain runs to 459 residues: Argininosuccinate lyase (459 aa).

The protein belongs to the lyase 1 family. Argininosuccinate lyase subfamily.

The protein resides in the cytoplasm. It catalyses the reaction 2-(N(omega)-L-arginino)succinate = fumarate + L-arginine. Its pathway is amino-acid biosynthesis; L-arginine biosynthesis; L-arginine from L-ornithine and carbamoyl phosphate: step 3/3. The protein is Argininosuccinate lyase of Sulfurihydrogenibium sp. (strain YO3AOP1).